Reading from the N-terminus, the 521-residue chain is Outer membrane protein assembly factor BamB (521 aa).

An N-terminal signal peptide occupies residues 1-19; the sequence is MKKLFLVIVPLLLSLLATS. Residue Cys-20 is the site of N-palmitoyl cysteine attachment. Cys-20 carries S-diacylglycerol cysteine lipidation. The interval 418 to 521 is disordered; it reads KSGSIESSPK…IGDFSKGDSD (104 aa). Positions 429–444 are enriched in basic and acidic residues; sequence LPDKKVDSNKTSKNDT. Residues 445–477 show a composition bias toward polar residues; it reads DSNPATTATSTKDIQNPANQEMINSTPVSNTST.

The protein belongs to the BamB family. As to quaternary structure, part of the Bam complex.

It is found in the cell outer membrane. Its function is as follows. Part of the outer membrane protein assembly complex, which is involved in assembly and insertion of beta-barrel proteins into the outer membrane. The chain is Outer membrane protein assembly factor BamB from Francisella salina.